Consider the following 162-residue polypeptide: Regulator of sigma D (162 aa).

It belongs to the Rsd/AlgQ family. As to quaternary structure, interacts with RpoD.

It is found in the cytoplasm. Its function is as follows. Binds RpoD and negatively regulates RpoD-mediated transcription activation by preventing the interaction between the primary sigma factor RpoD with the catalytic core of the RNA polymerase and with promoter DNA. May be involved in replacement of the RNA polymerase sigma subunit from RpoD to RpoS during the transition from exponential growth to the stationary phase. The protein is Regulator of sigma D of Salmonella paratyphi A (strain ATCC 9150 / SARB42).